The chain runs to 417 residues: Serine hydroxymethyltransferase (417 aa).

(6S)-5,6,7,8-tetrahydrofolate-binding positions include Leu-121 and 125–127 (GHL). An N6-(pyridoxal phosphate)lysine modification is found at Lys-229. 355–357 (SPF) is a binding site for (6S)-5,6,7,8-tetrahydrofolate.

The protein belongs to the SHMT family. Homodimer. Pyridoxal 5'-phosphate is required as a cofactor.

It is found in the cytoplasm. It carries out the reaction (6R)-5,10-methylene-5,6,7,8-tetrahydrofolate + glycine + H2O = (6S)-5,6,7,8-tetrahydrofolate + L-serine. The protein operates within one-carbon metabolism; tetrahydrofolate interconversion. Its pathway is amino-acid biosynthesis; glycine biosynthesis; glycine from L-serine: step 1/1. Its function is as follows. Catalyzes the reversible interconversion of serine and glycine with tetrahydrofolate (THF) serving as the one-carbon carrier. This reaction serves as the major source of one-carbon groups required for the biosynthesis of purines, thymidylate, methionine, and other important biomolecules. Also exhibits THF-independent aldolase activity toward beta-hydroxyamino acids, producing glycine and aldehydes, via a retro-aldol mechanism. The sequence is that of Serine hydroxymethyltransferase from Sodalis glossinidius (strain morsitans).